We begin with the raw amino-acid sequence, 941 residues long: Isoleucine--tRNA ligase (941 aa).

The short motif at 59–69 (PYANGNIHIGH) is the 'HIGH' region element. Glutamate 562 contacts L-isoleucyl-5'-AMP. Residues 603–607 (KMSKS) carry the 'KMSKS' region motif. Lysine 606 provides a ligand contact to ATP. Residues cysteine 904, cysteine 907, cysteine 924, and cysteine 927 each coordinate Zn(2+).

It belongs to the class-I aminoacyl-tRNA synthetase family. IleS type 1 subfamily. In terms of assembly, monomer. It depends on Zn(2+) as a cofactor.

It localises to the cytoplasm. The enzyme catalyses tRNA(Ile) + L-isoleucine + ATP = L-isoleucyl-tRNA(Ile) + AMP + diphosphate. Catalyzes the attachment of isoleucine to tRNA(Ile). As IleRS can inadvertently accommodate and process structurally similar amino acids such as valine, to avoid such errors it has two additional distinct tRNA(Ile)-dependent editing activities. One activity is designated as 'pretransfer' editing and involves the hydrolysis of activated Val-AMP. The other activity is designated 'posttransfer' editing and involves deacylation of mischarged Val-tRNA(Ile). The protein is Isoleucine--tRNA ligase of Haemophilus influenzae (strain PittGG).